The primary structure comprises 72 residues: Large ribosomal subunit protein bL31c (72 aa).

Belongs to the bacterial ribosomal protein bL31 family. Type A subfamily. In terms of assembly, part of the 50S ribosomal subunit.

It is found in the plastid. Its subcellular location is the chloroplast. Its function is as follows. Binds the 23S rRNA. The sequence is that of Large ribosomal subunit protein bL31c from Guillardia theta (Cryptophyte).